The sequence spans 591 residues: L-fucose isomerase (591 aa).

Catalysis depends on proton acceptor residues E337 and D361. Mn(2+)-binding residues include E337, D361, and H528.

The protein belongs to the L-fucose isomerase family. As to quaternary structure, homohexamer. Mn(2+) is required as a cofactor.

The protein resides in the cytoplasm. It catalyses the reaction L-fucose = L-fuculose. It functions in the pathway carbohydrate degradation; L-fucose degradation; L-lactaldehyde and glycerone phosphate from L-fucose: step 1/3. Its function is as follows. Converts the aldose L-fucose into the corresponding ketose L-fuculose. In Salmonella typhi, this protein is L-fucose isomerase.